A 166-amino-acid polypeptide reads, in one-letter code: Phospholipase A2 inhibitor clone 11 (166 aa).

The first 19 residues, 1–19 (MRLILLSGLLLLGIFLANG), serve as a signal peptide directing secretion. Positions 46–161 (LKGSFLIVHK…CDDNLLVVCE (116 aa)) constitute a C-type lectin domain. Disulfide bonds link cysteine 83-cysteine 160 and cysteine 138-cysteine 152. Residue asparagine 122 is glycosylated (N-linked (GlcNAc...) asparagine).

This sequence belongs to the alpha-type phospholipase A2 inhibitor family. In terms of assembly, homotrimer; non-covalently linked. Expressed by the liver.

The protein localises to the secreted. Its function is as follows. This phospholipase A2 inhibitor binds directly phospholipase A2 in the presence or absence of calcium. This is Phospholipase A2 inhibitor clone 11 from Bothrops neuwiedi (Neuwied's lancehead).